The following is a 154-amino-acid chain: Interleukin-2 (154 aa).

An N-terminal signal peptide occupies residues 1–20 (MYRMQLLSCIALSLALITNS). A glycan (O-linked (GalNAc...) threonine) is linked at Thr23. A disulfide bridge connects residues Cys78 and Cys126.

This sequence belongs to the IL-2 family.

It is found in the secreted. Functionally, cytokine produced by activated CD4-positive helper T-cells and to a lesser extend activated CD8-positive T-cells and natural killer (NK) cells that plays pivotal roles in the immune response and tolerance. Binds to a receptor complex composed of either the high-affinity trimeric IL-2R (IL2RA/CD25, IL2RB/CD122 and IL2RG/CD132) or the low-affinity dimeric IL-2R (IL2RB and IL2RG). Interaction with the receptor leads to oligomerization and conformation changes in the IL-2R subunits resulting in downstream signaling starting with phosphorylation of JAK1 and JAK3. In turn, JAK1 and JAK3 phosphorylate the receptor to form a docking site leading to the phosphorylation of several substrates including STAT5. This process leads to activation of several pathways including STAT, phosphoinositide-3-kinase/PI3K and mitogen-activated protein kinase/MAPK pathways. Functions as a T-cell growth factor and can increase NK-cell cytolytic activity as well. Promotes strong proliferation of activated B-cells and subsequently immunoglobulin production. Plays a pivotal role in regulating the adaptive immune system by controlling the survival and proliferation of regulatory T-cells, which are required for the maintenance of immune tolerance. Moreover, participates in the differentiation and homeostasis of effector T-cell subsets, including Th1, Th2, Th17 as well as memory CD8-positive T-cells. This Papio hamadryas (Hamadryas baboon) protein is Interleukin-2 (IL2).